Consider the following 452-residue polypeptide: Ribosomal protein uS12 methylthiotransferase RimO (452 aa).

An MTTase N-terminal domain is found at 5–116 (PTIAFSHLGC…IVDVLQRTES (112 aa)). [4Fe-4S] cluster contacts are provided by Cys14, Cys50, Cys79, Cys154, Cys158, and Cys161. One can recognise a Radical SAM core domain in the interval 140–369 (TTTSAVAYLR…MATQQPIAER (230 aa)). Residues 372-438 (RAQIGRLVDV…IYDLHGEVAS (67 aa)) enclose the TRAM domain.

Belongs to the methylthiotransferase family. RimO subfamily. [4Fe-4S] cluster serves as cofactor.

The protein resides in the cytoplasm. It catalyses the reaction L-aspartate(89)-[ribosomal protein uS12]-hydrogen + (sulfur carrier)-SH + AH2 + 2 S-adenosyl-L-methionine = 3-methylsulfanyl-L-aspartate(89)-[ribosomal protein uS12]-hydrogen + (sulfur carrier)-H + 5'-deoxyadenosine + L-methionine + A + S-adenosyl-L-homocysteine + 2 H(+). Its function is as follows. Catalyzes the methylthiolation of an aspartic acid residue of ribosomal protein uS12. The chain is Ribosomal protein uS12 methylthiotransferase RimO from Synechococcus elongatus (strain ATCC 33912 / PCC 7942 / FACHB-805) (Anacystis nidulans R2).